Reading from the N-terminus, the 833-residue chain is MEIHSVGPFIIGKTLGQGTTGKVKLGFHKDTGFKVGIKIINKELLINKPSMRRKIEREIVLMKLIDHPNAMKMYEVYETSKYLFLILEYVEGGELFDYLVEKGGLESGEALFFFQQIIIGLEYCHSRNICHRDLKPENLLLSGDKRIKIADFGMGSIVRKDMLLHTSCGSPHYASPEVVSGIDYDGQKADVWSCGVILYALLTGKLPFDDENIRRLLNKVKNGAFSMPPYIHKDAQDLLTKMLTVDPSKRISIKEIKEHPWFVSNFNQFQKATPVEEINAEPLVDYSQIDEDIFRSLMALGVGTIDEVKQQLVSNQKSATLIYYRLLEERKKFDSDVNKYGYKPKETRRNSLSDMSLKKIFSGSNNNNNNNNNNNNNNNNNNNNNNNNNNNNNNNNNININNNNNNNNNNNNNNNNNNNNNNNNNNNNNNNNSAVGKSNDSSSQQPPHIQQPHSQQIPSNSTSQESMQISPSNSANNMAIQQPIINNNNNNNNNNNNINNNINNNINNNINNNSNNVNRPTSEGLLKQALQQHHQQQQQQFNGNNNNNTMNVQPLTMSASSSSSSSSTTPSLSPNSSTTSSTSTSPQLSAIKPDHYQRRGSMTASTNPATSPTMSHRGKTSSPIEITSKVRKLKISESQSNTPNSPIIGSSPKKSWFSYFFSKNSSSNNLNAANGSAPSSPSLQSNGVGQLQTTQANYVIESKIDVNLIYVNLEKIIKKYGFELKYQQQQQQQNIKHCIVRSHHINSDGTPQFECEIEIKPSTFINPVSPSKQHHHHHHQQQQPQQQQMPPLNLNGGQNINHDQGFRVSIIHKSGSQHKFNNFTSSLEQILTI.

Residues 9–262 (FIIGKTLGQG…IKEIKEHPWF (254 aa)) form the Protein kinase domain. ATP is bound by residues 15–23 (LGQGTTGKV) and K38. The Proton acceptor role is filled by D133. One can recognise a UBA domain in the interval 288–329 (QIDEDIFRSLMALGVGTIDEVKQQLVSNQKSATLIYYRLLEE). Positions 338–351 (NKYGYKPKETRRNS) are enriched in basic and acidic residues. 3 disordered regions span residues 338 to 472 (NKYG…ISPS), 528 to 626 (QALQ…PIEI), and 764 to 799 (FINP…GGQN). Composition is skewed to low complexity over residues 365–432 (NNNN…NNNN) and 441–459 (SSSQ…QIPS). A compositionally biased stretch (polar residues) spans 460 to 472 (NSTSQESMQISPS). The span at 528–589 (QALQQHHQQQ…SSTSTSPQLS (62 aa)) shows a compositional bias: low complexity. Residues 600–625 (GSMTASTNPATSPTMSHRGKTSSPIE) show a composition bias toward polar residues.

This sequence belongs to the protein kinase superfamily. CAMK Ser/Thr protein kinase family.

The catalysed reaction is L-seryl-[protein] + ATP = O-phospho-L-seryl-[protein] + ADP + H(+). It carries out the reaction L-threonyl-[protein] + ATP = O-phospho-L-threonyl-[protein] + ADP + H(+). In Dictyostelium discoideum (Social amoeba), this protein is Probable serine/threonine-protein kinase DDB_G0277165.